Consider the following 569-residue polypeptide: Carotenoid cleavage dioxygenase 8 homolog B, chloroplastic (569 aa).

Residues 1–43 constitute a chloroplast transit peptide; sequence MSPAMLQASSLCVSAALSGAASRPGRLASQGHQGKRAVAQPLA. Positions 23-81 are disordered; that stretch reads RPGRLASQGHQGKRAVAQPLAASAVTEAAPPAPVVAPPARPVDAPRRRGGRGGGGGGGE. Positions 52–62 are enriched in pro residues; the sequence is PPAPVVAPPAR. Histidine 251, histidine 301, histidine 368, and histidine 558 together coordinate Fe cation.

This sequence belongs to the carotenoid oxygenase family. Requires Fe(2+) as cofactor. In terms of tissue distribution, expressed in parenchyma cells of the root stele, shoot apex, leaf buds, xylem parenchyma cells of the stem, inflorescences and panicles.

It is found in the plastid. The protein localises to the chloroplast. The catalysed reaction is 9-cis-10'-apo-beta-carotenal + 2 O2 = (2E,4E,6E)-7-hydroxy-4-methylhepta-2,4,6-trienal + (11R)-carlactone. The enzyme catalyses all-trans-10'-apo-beta-carotenal + O2 = (2E,4E,6E)-4-methylocta-2,4,6-trienedial + 13-apo-beta-carotenone. In terms of biological role, involved in strigolactones biosynthesis by cleaving the C(27) 9-cis-10'-apo-beta-carotenal produced by CCD7. Produces the C(19) carlactone and a C(8) hydroxyaldehyde. Also shows lower activity with all-trans-10'-apo-beta-carotenal producing a C(9) dialdehyde and the C(18) 13-apo-beta-carotenone. Strigolactones are hormones that inhibit tillering and shoot branching through the MAX-dependent pathway, contribute to the regulation of shoot architectural response to phosphate-limiting conditions and function as rhizosphere signal that stimulates hyphal branching of arbuscular mycorrhizal fungi and trigger seed germination of root parasitic weeds. This is Carotenoid cleavage dioxygenase 8 homolog B, chloroplastic (CCD8B) from Oryza sativa subsp. japonica (Rice).